Here is a 310-residue protein sequence, read N- to C-terminus: 1-aminocyclopropane-1-carboxylate oxidase 1 (310 aa).

Positions 113–133 (EELSKTMDEYVCQLHKFAERL) form a coiled coil. The Fe2OG dioxygenase domain maps to 158 to 259 (PAFGTKVAKY…RLSIATFYNP (102 aa)). 3 residues coordinate Fe cation: His182, Asp184, and His240. A 2-oxoglutarate-binding site is contributed by Arg250.

The protein belongs to the iron/ascorbate-dependent oxidoreductase family. Requires Fe(2+) as cofactor.

The enzyme catalyses 1-aminocyclopropane-1-carboxylate + L-ascorbate + O2 = ethene + L-dehydroascorbate + hydrogen cyanide + CO2 + 2 H2O. Its pathway is alkene biosynthesis; ethylene biosynthesis via S-adenosyl-L-methionine; ethylene from S-adenosyl-L-methionine: step 2/2. Its function is as follows. Enzyme involved in the ethylene biosynthesis. May promote stem elongation by maximizing the extensibility cells, possibly by activating ethylene biosynthesis, in response to very-long-chain fatty acids (VLCFAs C20:0 to C30:0). The chain is 1-aminocyclopropane-1-carboxylate oxidase 1 (ACO1) from Arabidopsis thaliana (Mouse-ear cress).